Here is a 124-residue protein sequence, read N- to C-terminus: Quinol oxidase subunit 4 (124 aa).

3 helical membrane-spanning segments follow: residues 16 to 36 (IVGFALSIVLTLLALWVAVYT), 44 to 64 (LWIIFGFAFIQAALQLLMFMH), and 78 to 98 (TLFGFFGAIVIVLGSIWIFAA).

This sequence belongs to the cytochrome c oxidase bacterial subunit 4 family.

Its subcellular location is the cell membrane. The catalysed reaction is 2 a quinol + O2 = 2 a quinone + 2 H2O. Functionally, catalyzes quinol oxidation with the concomitant reduction of oxygen to water. Major component for energy conversion during vegetative growth. In Bacillus spizizenii (strain ATCC 23059 / NRRL B-14472 / W23) (Bacillus subtilis subsp. spizizenii), this protein is Quinol oxidase subunit 4 (qoxD).